Reading from the N-terminus, the 1071-residue chain is DNA-directed RNA polymerase subunit beta (1071 aa).

It belongs to the RNA polymerase beta chain family. In terms of assembly, in plastids the minimal PEP RNA polymerase catalytic core is composed of four subunits: alpha, beta, beta', and beta''. When a (nuclear-encoded) sigma factor is associated with the core the holoenzyme is formed, which can initiate transcription.

It is found in the plastid. Its subcellular location is the chloroplast. The catalysed reaction is RNA(n) + a ribonucleoside 5'-triphosphate = RNA(n+1) + diphosphate. In terms of biological role, DNA-dependent RNA polymerase catalyzes the transcription of DNA into RNA using the four ribonucleoside triphosphates as substrates. The sequence is that of DNA-directed RNA polymerase subunit beta from Drimys granadensis.